Consider the following 217-residue polypeptide: MTHSAWHDEIKQVLPKDYYRRINRFLDEVYATGVVYPPRDNVFKALQVTPLEETRVLILGQDPYHGPLQAQGLSFSVPDSIPAPPSLQNILEELAADIGVRNHHDLSSWAEQGVLLLNACLTVPEGRANGHAGLIWEPFTDAVIKVLNAKDRPVVFILWGAYARRKKALITNPIHHVIESPHPSPLSAYRGFFGSKPFSRANAILEKEGLGQIDWLR.

Asp62 functions as the Proton acceptor in the catalytic mechanism.

Belongs to the uracil-DNA glycosylase (UDG) superfamily. UNG family.

The protein resides in the cytoplasm. The catalysed reaction is Hydrolyzes single-stranded DNA or mismatched double-stranded DNA and polynucleotides, releasing free uracil.. Its function is as follows. Excises uracil residues from the DNA which can arise as a result of misincorporation of dUMP residues by DNA polymerase or due to deamination of cytosine. This is Uracil-DNA glycosylase from Streptococcus equi subsp. equi (strain 4047).